The primary structure comprises 594 residues: Alanine--tRNA ligase (594 aa).

Residues histidine 456, histidine 460, cysteine 558, and histidine 562 each coordinate Zn(2+).

Belongs to the class-II aminoacyl-tRNA synthetase family. Zn(2+) serves as cofactor.

The protein localises to the cytoplasm. It catalyses the reaction tRNA(Ala) + L-alanine + ATP = L-alanyl-tRNA(Ala) + AMP + diphosphate. In terms of biological role, catalyzes the attachment of alanine to tRNA(Ala) in a two-step reaction: alanine is first activated by ATP to form Ala-AMP and then transferred to the acceptor end of tRNA(Ala). Also edits incorrectly charged Ser-tRNA(Ala) and Gly-tRNA(Ala) via its editing domain. The sequence is that of Alanine--tRNA ligase (alaS) from Borrelia garinii subsp. bavariensis (strain ATCC BAA-2496 / DSM 23469 / PBi) (Borreliella bavariensis).